The chain runs to 338 residues: Ferredoxin--NADP reductase (338 aa).

Aspartate 35, glutamine 43, tyrosine 48, alanine 88, phenylalanine 122, aspartate 289, and threonine 330 together coordinate FAD.

Belongs to the ferredoxin--NADP reductase type 2 family. Homodimer. The cofactor is FAD.

The enzyme catalyses 2 reduced [2Fe-2S]-[ferredoxin] + NADP(+) + H(+) = 2 oxidized [2Fe-2S]-[ferredoxin] + NADPH. This Ehrlichia canis (strain Jake) protein is Ferredoxin--NADP reductase.